A 545-amino-acid chain; its full sequence is Chaperonin GroEL (545 aa).

ATP-binding positions include 30–33, Lys-51, 87–91, Gly-415, 479–481, and Asp-495; these read TLGP, DGTTT, and NAA. The segment at 526–545 is disordered; sequence KDDAPAPAMPDMGGMGGMGM.

Belongs to the chaperonin (HSP60) family. Forms a cylinder of 14 subunits composed of two heptameric rings stacked back-to-back. Interacts with the co-chaperonin GroES.

It is found in the cytoplasm. The catalysed reaction is ATP + H2O + a folded polypeptide = ADP + phosphate + an unfolded polypeptide.. Together with its co-chaperonin GroES, plays an essential role in assisting protein folding. The GroEL-GroES system forms a nano-cage that allows encapsulation of the non-native substrate proteins and provides a physical environment optimized to promote and accelerate protein folding. This is Chaperonin GroEL from Paracidovorax citrulli (strain AAC00-1) (Acidovorax citrulli).